A 368-amino-acid polypeptide reads, in one-letter code: Chaperone protein DnaJ (368 aa).

Positions 5-69 (DYYEVLGVAR…NQRARYDQFG (65 aa)) constitute a J domain. The CR-type zinc finger occupies 125–207 (GVEKVITIPV…CRGAGRVRKN (83 aa)). Positions 138, 141, 155, 158, 181, 184, 195, and 198 each coordinate Zn(2+). CXXCXGXG motif repeat units lie at residues 138–145 (CGTCHGSG), 155–162 (CKRCGGSG), 181–188 (CSTCHGRG), and 195–202 (CETCRGAG).

This sequence belongs to the DnaJ family. In terms of assembly, homodimer. Zn(2+) serves as cofactor.

It localises to the cytoplasm. Participates actively in the response to hyperosmotic and heat shock by preventing the aggregation of stress-denatured proteins and by disaggregating proteins, also in an autonomous, DnaK-independent fashion. Unfolded proteins bind initially to DnaJ; upon interaction with the DnaJ-bound protein, DnaK hydrolyzes its bound ATP, resulting in the formation of a stable complex. GrpE releases ADP from DnaK; ATP binding to DnaK triggers the release of the substrate protein, thus completing the reaction cycle. Several rounds of ATP-dependent interactions between DnaJ, DnaK and GrpE are required for fully efficient folding. Also involved, together with DnaK and GrpE, in the DNA replication of plasmids through activation of initiation proteins. The polypeptide is Chaperone protein DnaJ (Exiguobacterium sibiricum (strain DSM 17290 / CCUG 55495 / CIP 109462 / JCM 13490 / 255-15)).